A 302-amino-acid polypeptide reads, in one-letter code: MRIVLITGISGSGKSVALNALEDAGYYCVDNLPPHVLPELARYLAGEGQHRLAVAIDARSSASLDEMPGLIRDLSREHDVRVLFLNASTQALIQRFSETRRRHPLSGSLSHDADVGLLSSLEEAIERERHLVAPLAEFGHQIDTSTLRANALRTWVKRFIEQKNNDLMVMFESFGFKRGVPLDADLMFDVRALPNPYYDHELRPLTGLDQPVIAFLDALPIVHQMIDDIHAFLMKWLPHFRDDNRSYLTVAIGCTGGQHRSVFIAETLAARLAHEANVIVRHRDAPVDVDASSRLVSEVDRP.

Residue 8–15 participates in ATP binding; sequence GISGSGKS. Position 57-60 (57-60) interacts with GTP; that stretch reads DARS.

It belongs to the RapZ-like family.

Its function is as follows. Displays ATPase and GTPase activities. The chain is Nucleotide-binding protein Bcep18194_A6125 from Burkholderia lata (strain ATCC 17760 / DSM 23089 / LMG 22485 / NCIMB 9086 / R18194 / 383).